A 137-amino-acid polypeptide reads, in one-letter code: Ubiquitin-conjugating enzyme variant MMS2 (137 aa).

The 133-residue stretch at 5 to 137 (PRNFRLLEEL…LRQPKEGETF (133 aa)) folds into the UBC core domain. At Ser-71 the chain carries Phosphoserine.

The protein belongs to the ubiquitin-conjugating enzyme family. As to quaternary structure, heterodimer with UBC13.

Functionally, has a role in the DNA error-free postreplication repair (PRR) pathway. Lacks catalytic activity by itself. The UBC13/MMS2 heterodimer catalyzes the synthesis of non-canonical poly-ubiquitin chains that are linked through 'Lys-63'. This is Ubiquitin-conjugating enzyme variant MMS2 (MMS2) from Saccharomyces cerevisiae (strain ATCC 204508 / S288c) (Baker's yeast).